The sequence spans 71 residues: Large ribosomal subunit protein uL29 (71 aa).

Belongs to the universal ribosomal protein uL29 family.

In Aeropyrum pernix (strain ATCC 700893 / DSM 11879 / JCM 9820 / NBRC 100138 / K1), this protein is Large ribosomal subunit protein uL29 (rpl29).